Reading from the N-terminus, the 171-residue chain is Ponticulin-like protein F (171 aa).

Positions 1-20 (MKFIPALIIFVFTIFALTNS) are cleaved as a signal peptide. Gly-149 carries GPI-like-anchor amidated glycine lipidation. The propeptide at 150–171 (TSSTIVIPFALILSLLLSVITL) is removed in mature form.

It belongs to the ponticulin family. In terms of processing, the GPI-like-anchor contains a phosphoceramide group, rather than a phosphatidyl group.

The protein localises to the cell membrane. In Dictyostelium discoideum (Social amoeba), this protein is Ponticulin-like protein F (ponF).